Consider the following 524-residue polypeptide: Leukotriene-B4 omega-hydroxylase 3 (524 aa).

Heme contacts are provided by Glu-328 and Cys-468.

This sequence belongs to the cytochrome P450 family. Heme serves as cofactor.

The protein resides in the endoplasmic reticulum membrane. It is found in the microsome membrane. The catalysed reaction is leukotriene B4 + reduced [NADPH--hemoprotein reductase] + O2 = 20-hydroxy-leukotriene B4 + oxidized [NADPH--hemoprotein reductase] + H2O + H(+). Its pathway is lipid metabolism; leukotriene B4 degradation. Functionally, cytochromes P450 are a group of heme-thiolate monooxygenases. Catalyzes the omega-hydroxylation of LTB4. The chain is Leukotriene-B4 omega-hydroxylase 3 (Cyp4f14) from Mus musculus (Mouse).